The following is a 572-amino-acid chain: MALIIPRSQYVATYGPTVGDKVRLGDTDLWATIEQDFLTKGDECKFGGGKSVRDGMAQSSTATRDNPNVLDFALTNVMIIDAKLGIIKADIGIRDGRIVGIGQAGNPDTMDNVTPNMIIGASTEVHNGAHLIATAGGIDTHIHWICPQQAQHAIENGITTMIGGGSGPADGTHATTCTPGKFNIERMFQACEALPVNIGFFGKGNCSMLEPLKEQVVAGALGLKIHEDWGATPAVIDAALKVADEMDVQVAIHTDTLNESGFLEDTMKAINGRVIHTFHTEGAGGGHAPDIIKAAMYPNVLPASTNPTRPFTVNTIDEHLDMLMVCHHLDKRVPEDVAFADSRIRPETIAAEDILHDMGVFSIMSSDSQAMGRVGEVVTRTWQTADKMKAQRGALGDEGNDNFRIKRYIAKYTINPAIAHGISQYVGSLEVGKLADIVLWKPQFFGVKPEFVMKKGFISFAKMGDPNASIPTPQPVFYRPMFGANAKANTESAVYFVSQASVDANIKAQYGIQKETLAVKGCRDVGKKDLVHNNATPEITVDPERYEVRVDGEHITCEPATKVPLAQRYFLF.

One can recognise a Urease domain in the interval 136–572; the sequence is GGIDTHIHWI…VPLAQRYFLF (437 aa). Positions 141, 143, and 224 each coordinate Ni(2+). N6-carboxylysine is present on K224. Position 226 (H226) interacts with substrate. Ni(2+) is bound by residues H253 and H279. The active-site Proton donor is the H327. D367 contributes to the Ni(2+) binding site.

This sequence belongs to the metallo-dependent hydrolases superfamily. Urease alpha subunit family. As to quaternary structure, heterotrimer of UreA (gamma), UreB (beta) and UreC (alpha) subunits. Three heterotrimers associate to form the active enzyme. Ni cation is required as a cofactor. In terms of processing, carboxylation allows a single lysine to coordinate two nickel ions.

The protein resides in the cytoplasm. The catalysed reaction is urea + 2 H2O + H(+) = hydrogencarbonate + 2 NH4(+). Its pathway is nitrogen metabolism; urea degradation; CO(2) and NH(3) from urea (urease route): step 1/1. The protein is Urease subunit alpha of Actinobacillus pleuropneumoniae serotype 3 (strain JL03).